We begin with the raw amino-acid sequence, 143 residues long: Transcriptional regulator MraZ (143 aa).

SpoVT-AbrB domains are found at residues Glu-5–Glu-47 and Ala-76–Thr-119.

It belongs to the MraZ family. In terms of assembly, forms oligomers.

It is found in the cytoplasm. Its subcellular location is the nucleoid. In Staphylococcus epidermidis (strain ATCC 35984 / DSM 28319 / BCRC 17069 / CCUG 31568 / BM 3577 / RP62A), this protein is Transcriptional regulator MraZ.